Reading from the N-terminus, the 618-residue chain is Carotenoid cleavage dioxygenase 7, chloroplastic (618 aa).

The N-terminal 31 residues, Met1–Arg31, are a transit peptide targeting the chloroplast. Residues Pro11–Ile34 form a disordered region. Fe cation is bound by residues His266, His319, His398, and His612.

The protein belongs to the carotenoid oxygenase family. Requires Fe(2+) as cofactor. As to expression, expressed in flowers, siliques, inflorescence stems, petiole, leaves and roots.

The protein localises to the plastid. It is found in the chloroplast. The catalysed reaction is 9-cis-beta-carotene + O2 = 9-cis-10'-apo-beta-carotenal + beta-ionone. Involved in strigolactones biosynthesis by cleaving asymmetrically a variety of linear and cyclic carotenoids at the 9-10 double bond. Produces one C(13) beta-ionone and the C(27) 10'-apo-beta-carotenal. Strigolactones are hormones that inhibit tillering and shoot branching through the MAX-dependent pathway, contribute to the regulation of shoot architectural response to phosphate-limiting conditions and function as rhizosphere signal that stimulates hyphal branching of arbuscular mycorrhizal fungi and trigger seed germination of root parasitic weeds. No activity on lycopene, lutein, zeaxanthin, violaxanthin or neoxanthin. Probably not involved in abscisic acid biosynthesis. The chain is Carotenoid cleavage dioxygenase 7, chloroplastic (CCD7) from Arabidopsis thaliana (Mouse-ear cress).